A 276-amino-acid polypeptide reads, in one-letter code: Glyoxal reductase (276 aa).

The Proton donor role is filled by Tyr54. His112 is a substrate binding site. 190 to 242 (SPLMQGQLLDNEVLTQIAEKHNKSVAQVILRWDLQHGVVTIPKSIKEHRIIEN) contacts NADP(+).

It belongs to the aldo/keto reductase family.

The catalysed reaction is (S)-lactaldehyde + NADP(+) = methylglyoxal + NADPH + H(+). Reduces glyoxal and methylglyoxal (2-oxopropanal). Is not involved in the vitamin B6 biosynthesis. This Bacillus subtilis (strain 168) protein is Glyoxal reductase (yvgN).